The chain runs to 216 residues: Protein Syd (216 aa).

It belongs to the Syd family.

It is found in the cell inner membrane. Functionally, interacts with the SecY protein in vivo. May bind preferentially to an uncomplexed state of SecY, thus functioning either as a chelating agent for excess SecY in the cell or as a regulatory factor that negatively controls the translocase function. This chain is Protein Syd, found in Shewanella baltica (strain OS155 / ATCC BAA-1091).